The following is a 604-amino-acid chain: Prostaglandin G/H synthase 2 (604 aa).

Positions 1 to 17 are cleaved as a signal peptide; the sequence is MLFRAVLLCAALGLSQA. In terms of domain architecture, EGF-like spans 18–55; the sequence is ANPCCSNPCQNRGECMSTGFDQYKCDCTRTGFYGENCT. 4 disulfide bridges follow: Cys-21-Cys-32, Cys-22-Cys-145, Cys-26-Cys-42, and Cys-44-Cys-54. N-linked (GlcNAc...) asparagine glycosylation occurs at Asn-53. Arg-106 is a binding site for substrate. An N-linked (GlcNAc...) asparagine glycan is attached at Asn-130. His-193 functions as the Proton acceptor in the catalytic mechanism. Tyr-341 contacts substrate. Tyr-371 functions as the For cyclooxygenase activity in the catalytic mechanism. His-374 is a binding site for heme b. Asn-396 carries an N-linked (GlcNAc...) asparagine glycan. An S-nitrosocysteine modification is found at Cys-526. An intrachain disulfide couples Cys-555 to Cys-561. Ser-565 is modified (O-acetylserine; by SPHK1). Asn-580 carries N-linked (GlcNAc...) asparagine glycosylation.

It belongs to the prostaglandin G/H synthase family. Homodimer. The cofactor is heme b. S-nitrosylation by NOS2 (iNOS) activates enzyme activity. S-nitrosylation may take place on different Cys residues in addition to Cys-526. In terms of processing, acetylated at Ser-565 by SPHK1. During neuroinflammation, acetylation by SPHK1 promotes neuronal secretion of specialized preresolving mediators (SPMs), especially 15-R-lipoxin A4, which results in an increase of phagocytic microglia. Following colon injury, expressed in the wound bed mesenchyme during the first phase of repair, probably by colonic mesenchymal stem cells (at protein level).

It is found in the microsome membrane. Its subcellular location is the endoplasmic reticulum membrane. It localises to the nucleus inner membrane. The protein resides in the nucleus outer membrane. It carries out the reaction (5Z,8Z,11Z,14Z)-eicosatetraenoate + AH2 + 2 O2 = prostaglandin H2 + A + H2O. The catalysed reaction is (5Z,8Z,11Z,14Z)-eicosatetraenoate + 2 O2 = prostaglandin G2. It catalyses the reaction prostaglandin G2 + AH2 = prostaglandin H2 + A + H2O. The enzyme catalyses (5Z,8Z,11Z,14Z,17Z)-eicosapentaenoate + 2 O2 = prostaglandin G3. It carries out the reaction prostaglandin G3 + AH2 = prostaglandin H3 + A + H2O. The catalysed reaction is (8Z,11Z,14Z)-eicosatrienoate + 2 O2 = prostaglandin G1. It catalyses the reaction prostaglandin G1 + AH2 = prostaglandin H1 + A + H2O. The enzyme catalyses 2-(5Z,8Z,11Z,14Z)-eicosatetraenoyl-sn-glycero-3-phosphoethanolamine + 2 O2 = 2-(prostaglandin G2)-sn-glycero-3-phosphoethanolamine. It carries out the reaction 2-(prostaglandin G2)-sn-glycero-3-phosphoethanolamine + AH2 = 2-(prostaglandin H2)-sn-glycero-3-phosphoethanolamine + A + H2O. The catalysed reaction is 2-(5Z,8Z,11Z,14Z)-eicosatetraenoyl-sn-glycero-3-phosphocholine + 2 O2 = 2-(prostaglandin G2)-sn-glycero-3-phosphocholine. It catalyses the reaction 2-(prostaglandin G2)-sn-glycero-3-phosphocholine + AH2 = 2-(prostaglandin H2)-sn-glycero-3-phosphocholine + A + H2O. The enzyme catalyses (15S)-hydroperoxy-(5Z,8Z,11Z,13E)-eicosatetraenoate + AH2 = (15S)-hydroxy-(5Z,8Z,11Z,13E)-eicosatetraenoate + A + H2O. It carries out the reaction 2-(5Z,8Z,11Z,14Z)-eicosatetraenoyl-sn-glycero-3-phosphocholine + AH2 + O2 = 2-[(15S)-hydroxy-(5Z,8Z,11Z,13E)-eicosatetraenoyl]-sn-glycero-3-phosphocholine + A + H2O. The catalysed reaction is 2-(5Z,8Z,11Z,14Z)-eicosatetraenoyl-sn-glycero-3-phosphocholine + AH2 + O2 = 2-[(15R)-hydroxy-(5Z,8Z,11Z,13E)-eicosatetraenoyl]-sn-glycero-3-phosphocholine + A + H2O. It catalyses the reaction 2-(5Z,8Z,11Z,14Z)-eicosatetraenoyl-sn-glycero-3-phosphocholine + AH2 + O2 = 2-[(11R)-hydroxy-(5Z,8Z,12E,14Z)-eicosatetraenoyl]-sn-glycero-3-phosphocholine + A + H2O. The enzyme catalyses (9Z,12Z)-octadecadienoate + AH2 + O2 = 9-hydroxy-(10E,12Z)-octadecadienoate + A + H2O. It carries out the reaction (9Z,12Z)-octadecadienoate + AH2 + O2 = 13-hydroxy-(9Z,11E)-octadecadienoate + A + H2O. The catalysed reaction is (5Z,8Z,11Z,14Z)-eicosatetraenoate + AH2 + O2 = (15R)-hydroxy-(5Z,8Z,11Z,13E)-eicosatetraenoate + A + H2O. It catalyses the reaction (5Z,8Z,11Z,14Z)-eicosatetraenoate + AH2 + O2 = (11R)-hydroxy-(5Z,8Z,12E,14Z)-eicosatetraenoate + A + H2O. The enzyme catalyses (5Z,8Z,11Z,14Z,17Z)-eicosapentaenoate + AH2 + O2 = (11R)-hydroxy-(5Z,8Z,12E,14Z,17Z)-eicosapentaenoate + A + H2O. It carries out the reaction (5Z,8Z,11Z,14Z,17Z)-eicosapentaenoate + AH2 + O2 = (18S)-hydroxy-(5Z,8Z,11Z,14Z,16E)-eicosapentaenoate + A + H2O. The catalysed reaction is (5Z,8Z,11Z,14Z,17Z)-eicosapentaenoate + AH2 + O2 = (18R)-hydroxy-(5Z,8Z,11Z,14Z,16E)-eicosapentaenoate + A + H2O. It catalyses the reaction (5Z,8Z,11Z,14Z,17Z)-eicosapentaenoate + AH2 + O2 = (15R)-hydroxy-(5Z,8Z,11Z,13E,17Z)-eicosapentaenoate + A + H2O. The enzyme catalyses (5Z,8Z,11Z,14Z,17Z)-eicosapentaenoate + AH2 + O2 = (15S)-hydroxy-(5Z,8Z,11Z,13E,17Z)-eicosapentaenoate + A + H2O. It carries out the reaction (7Z,10Z,13Z,16Z,19Z)-docosapentaenoate + AH2 + O2 = 13R-hydroxy-(7Z,10Z,14E,16Z,19Z)-docosapentaenoate + A + H2O. The catalysed reaction is (4Z,7Z,10Z,13Z,16Z,19Z)-docosahexaenoate + AH2 + O2 = 13-hydroxy-(4Z,7Z,10Z,14E,16Z,19Z)-docosahexaenoate + A + H2O. It catalyses the reaction (5S)-hydroxy-(6E,8Z,11Z,14Z)-eicosatetraenoate + AH2 + O2 = (5S,15R)-dihydroxy-(6E,8Z,11Z,13E)-eicosatetraenoate + A + H2O. The enzyme catalyses (4Z,7Z,10Z,13Z,16Z,19Z)-docosahexaenoate + AH2 + O2 = 17R-hydroxy-(4Z,7Z,10Z,13Z,15E,19Z)-docosahexaenoate + A + H2O. It carries out the reaction (5S)-hydroxy-(6E,8Z,11Z,14Z)-eicosatetraenoate + AH2 + O2 = (5S,15S)-dihydroxy-(6E,8Z,11Z,13E)-eicosatetraenoate + A + H2O. The catalysed reaction is (5S)-hydroxy-(6E,8Z,11Z,14Z)-eicosatetraenoate + AH2 + O2 = (5S,11R)-dihydroxy-(6E,8Z,12E,14Z)-eicosatetraenoate + A + H2O. It catalyses the reaction 2-(5Z,8Z,11Z,14Z-eicosatetraenoyl)-glycerol + 2 O2 = 2-glyceryl-prostaglandin G2. The enzyme catalyses 2-glyceryl-prostaglandin G2 + AH2 = 2-glyceryl-prostaglandin H2 + A + H2O. It carries out the reaction (5Z,8Z,11Z,14Z)-eicosatetraenoate + O2 = (15R)-hydroperoxy-(5Z,8Z,11Z,13E)-eicosatetraenoate. The catalysed reaction is (5Z,8Z,11Z,14Z)-eicosatetraenoate + O2 = 11R-hydroperoxy-(5Z,8Z,12E,14Z)-eicosatetraenoate. It catalyses the reaction (9Z,12Z)-octadecadienoate + AH2 + O2 = (9R)-hydroxy-(10E,12Z)-octadecadienoate + A + H2O. The enzyme catalyses (9Z,12Z)-octadecadienoate + AH2 + O2 = (9S)-hydroxy-(10E,12Z)-octadecadienoate + A + H2O. It carries out the reaction (9Z,12Z)-octadecadienoate + AH2 + O2 = (13S)-hydroxy-(9Z,11E)-octadecadienoate + A + H2O. The catalysed reaction is (9Z,12Z)-octadecadienoate + AH2 + O2 = (13R)-hydroxy-(9Z,11E)-octadecadienoate + A + H2O. Its pathway is lipid metabolism; prostaglandin biosynthesis. With respect to regulation, inhibited by the nonsteroidal anti-inflammatory drugs aspirin, naproxen, diclofenac, meclofenamic acid, indomethacin and their analogs. Functionally, dual cyclooxygenase and peroxidase in the biosynthesis pathway of prostanoids, a class of C20 oxylipins mainly derived from arachidonate, with a particular role in the inflammatory response. The cyclooxygenase activity oxygenates arachidonate (AA, C20:4(n-6)) to the hydroperoxy endoperoxide prostaglandin G2 (PGG2), and the peroxidase activity reduces PGG2 to the hydroxy endoperoxide PGH2, the precursor of all 2-series prostaglandins and thromboxanes. This complex transformation is initiated by abstraction of hydrogen at carbon 13 (with S-stereochemistry), followed by insertion of molecular O2 to form the endoperoxide bridge between carbon 9 and 11 that defines prostaglandins. The insertion of a second molecule of O2 (bis-oxygenase activity) yields a hydroperoxy group in PGG2 that is then reduced to PGH2 by two electrons. Similarly catalyzes successive cyclooxygenation and peroxidation of dihomo-gamma-linoleate (DGLA, C20:3(n-6)) and eicosapentaenoate (EPA, C20:5(n-3)) to corresponding PGH1 and PGH3, the precursors of 1- and 3-series prostaglandins. In an alternative pathway of prostanoid biosynthesis, converts 2-arachidonoyl lysophopholipids to prostanoid lysophopholipids, which are then hydrolyzed by intracellular phospholipases to release free prostanoids. Metabolizes 2-arachidonoyl glycerol yielding the glyceryl ester of PGH2, a process that can contribute to pain response. Generates lipid mediators from n-3 and n-6 polyunsaturated fatty acids (PUFAs) via a lipoxygenase-type mechanism. Oxygenates PUFAs to hydroperoxy compounds and then reduces them to corresponding alcohols. Plays a role in the generation of resolution phase interaction products (resolvins) during both sterile and infectious inflammation. Metabolizes docosahexaenoate (DHA, C22:6(n-3)) to 17R-HDHA, a precursor of the D-series resolvins (RvDs). As a component of the biosynthetic pathway of E-series resolvins (RvEs), converts eicosapentaenoate (EPA, C20:5(n-3)) primarily to 18S-HEPE that is further metabolized by ALOX5 and LTA4H to generate 18S-RvE1 and 18S-RvE2. In vascular endothelial cells, converts docosapentaenoate (DPA, C22:5(n-3)) to 13R-HDPA, a precursor for 13-series resolvins (RvTs) shown to activate macrophage phagocytosis during bacterial infection. In activated leukocytes, contributes to oxygenation of hydroxyeicosatetraenoates (HETE) to diHETES (5,15-diHETE and 5,11-diHETE). Can also use linoleate (LA, (9Z,12Z)-octadecadienoate, C18:2(n-6)) as substrate and produce hydroxyoctadecadienoates (HODEs) in a regio- and stereospecific manner, being (9R)-HODE ((9R)-hydroxy-(10E,12Z)-octadecadienoate) and (13S)-HODE ((13S)-hydroxy-(9Z,11E)-octadecadienoate) its major products. During neuroinflammation, plays a role in neuronal secretion of specialized preresolving mediators (SPMs) 15R-lipoxin A4 that regulates phagocytic microglia. This is Prostaglandin G/H synthase 2 from Mus musculus (Mouse).